A 273-amino-acid chain; its full sequence is uncharacterized protein (273 aa).

The protein belongs to the AtsA family.

This is an uncharacterized protein from Mycobacterium tuberculosis (strain CDC 1551 / Oshkosh).